We begin with the raw amino-acid sequence, 239 residues long: ATP synthase subunit a (239 aa).

5 helical membrane passes run 17-37, 75-95, 113-133, 182-202, and 206-226; these read GTVCMMVLLTCLIVFFLVYFF, FHLLAFTLFLFVFVANNIGLI, DPFVTLTLAFIMITLTHLFGV, LLTLIANMMNNLGWFSLPLAI, and MVWIAFSLFIGSIQAFVFVTL.

The protein belongs to the ATPase A chain family. F-type ATPases have 2 components, CF(1) - the catalytic core - and CF(0) - the membrane proton channel. CF(1) has five subunits: alpha(3), beta(3), gamma(1), delta(1), epsilon(1). CF(0) has three main subunits: a(1), b(2) and c(9-12). The alpha and beta chains form an alternating ring which encloses part of the gamma chain. CF(1) is attached to CF(0) by a central stalk formed by the gamma and epsilon chains, while a peripheral stalk is formed by the delta and b chains.

The protein resides in the cell membrane. In terms of biological role, key component of the proton channel; it plays a direct role in the translocation of protons across the membrane. This is ATP synthase subunit a from Enterococcus hirae (strain ATCC 9790 / DSM 20160 / JCM 8729 / LMG 6399 / NBRC 3181 / NCIMB 6459 / NCDO 1258 / NCTC 12367 / WDCM 00089 / R).